The primary structure comprises 372 residues: Chaperone protein DnaJ (372 aa).

A J domain is found at 5 to 70; it reads DYYDLLEVSR…EKRAGYDRYG (66 aa). The segment at 134–212 adopts a CR-type zinc-finger fold; sequence GIQAPIHYVT…CGGSGRKRDE (79 aa). Residues cysteine 147, cysteine 150, cysteine 164, cysteine 167, cysteine 186, cysteine 189, cysteine 200, and cysteine 203 each contribute to the Zn(2+) site. CXXCXGXG motif repeat units follow at residues 147-154, 164-171, 186-193, and 200-207; these read CNTCQGTG, CNTCQGSG, CTTCYGEG, and CKKCGGSG.

The protein belongs to the DnaJ family. In terms of assembly, homodimer. Zn(2+) serves as cofactor.

Its subcellular location is the cytoplasm. In terms of biological role, participates actively in the response to hyperosmotic and heat shock by preventing the aggregation of stress-denatured proteins and by disaggregating proteins, also in an autonomous, DnaK-independent fashion. Unfolded proteins bind initially to DnaJ; upon interaction with the DnaJ-bound protein, DnaK hydrolyzes its bound ATP, resulting in the formation of a stable complex. GrpE releases ADP from DnaK; ATP binding to DnaK triggers the release of the substrate protein, thus completing the reaction cycle. Several rounds of ATP-dependent interactions between DnaJ, DnaK and GrpE are required for fully efficient folding. Also involved, together with DnaK and GrpE, in the DNA replication of plasmids through activation of initiation proteins. This Wolbachia pipientis subsp. Culex pipiens (strain wPip) protein is Chaperone protein DnaJ.